Here is a 172-residue protein sequence, read N- to C-terminus: Myosin regulatory light chain 2, smooth muscle major isoform (172 aa).

The segment covering 1–16 (MSSKRAKAKTTKKRPQ) has biased composition (basic residues). The disordered stretch occupies residues 1-20 (MSSKRAKAKTTKKRPQRATS). Ser-2 is modified (N-acetylserine). EF-hand domains are found at residues 29-64 (SQIQ…MGKN), 98-133 (DPED…MGDR), and 134-169 (FTDE…GAKD). The Ca(2+) site is built by Asp-42, Asn-44, Asp-46, and Asp-53.

Myosin is a hexamer of 2 heavy chains and 4 light chains.

Its function is as follows. Myosin regulatory subunit that plays an important role in regulation of both smooth muscle and nonmuscle cell contractile activity. Implicated in cytokinesis, receptor capping, and cell locomotion. The sequence is that of Myosin regulatory light chain 2, smooth muscle major isoform from Gallus gallus (Chicken).